The following is a 376-amino-acid chain: Methionine import ATP-binding protein MetN 1 (376 aa).

The region spanning 34 to 273 (VRFINLGKTY…PQHEVSKTLL (240 aa)) is the ABC transporter domain. 70–77 (GRSGAGKS) provides a ligand contact to ATP.

The protein belongs to the ABC transporter superfamily. Methionine importer (TC 3.A.1.24) family. In terms of assembly, the complex is composed of two ATP-binding proteins (MetN), two transmembrane proteins (MetI) and a solute-binding protein (MetQ).

Its subcellular location is the cell inner membrane. The catalysed reaction is L-methionine(out) + ATP + H2O = L-methionine(in) + ADP + phosphate + H(+). The enzyme catalyses D-methionine(out) + ATP + H2O = D-methionine(in) + ADP + phosphate + H(+). In terms of biological role, part of the ABC transporter complex MetNIQ involved in methionine import. Responsible for energy coupling to the transport system. This chain is Methionine import ATP-binding protein MetN 1, found in Pseudomonas syringae pv. tomato (strain ATCC BAA-871 / DC3000).